A 290-amino-acid polypeptide reads, in one-letter code: Homeobox protein HMX3-B (290 aa).

Disordered stretches follow at residues 1 to 41 and 96 to 169; these read MADS…GSSK and EKVN…KKKT. Residues 107-124 are compositionally biased toward basic and acidic residues; sequence LDRHTPDPPKSDQESKEE. The segment covering 125-137 has biased composition (acidic residues); it reads SADDEIALEESDA. Basic and acidic residues predominate over residues 138-162; it reads EEPKKETDQEDDWMRKGEDLESDKK. Positions 166-225 form a DNA-binding region, homeobox; the sequence is KKKTRTVFSRSQVFQLESTFDIKRYLSSSERAGLAASLHLTETQVKIWFQNRRNKWKRQL.

The protein belongs to the HMX homeobox family. In terms of tissue distribution, expressed in the ear placode and vesicle and in cells forming the vestibulo-acoustic ganglion.

It is found in the nucleus. In terms of biological role, transcription factor involved in specification of neuronal cell types and which is required for inner ear and hypothalamus development. Binds to the 5'-CAAGTG-3' core sequence. The sequence is that of Homeobox protein HMX3-B (hmx3b) from Oryzias latipes (Japanese rice fish).